Consider the following 508-residue polypeptide: Maturase K (508 aa).

This sequence belongs to the intron maturase 2 family. MatK subfamily.

It localises to the plastid. The protein localises to the chloroplast. Functionally, usually encoded in the trnK tRNA gene intron. Probably assists in splicing its own and other chloroplast group II introns. The polypeptide is Maturase K (Verbena rigida (Tuberous vervain)).